Here is a 295-residue protein sequence, read N- to C-terminus: UDP-N-acetylenolpyruvoylglucosamine reductase (295 aa).

The region spanning 24–188 (KVGGNAEIFF…LKAVFKVNKG (165 aa)) is the FAD-binding PCMH-type domain. The active site involves arginine 168. Serine 217 (proton donor) is an active-site residue. Residue glutamate 287 is part of the active site.

This sequence belongs to the MurB family. Requires FAD as cofactor.

It is found in the cytoplasm. The catalysed reaction is UDP-N-acetyl-alpha-D-muramate + NADP(+) = UDP-N-acetyl-3-O-(1-carboxyvinyl)-alpha-D-glucosamine + NADPH + H(+). It functions in the pathway cell wall biogenesis; peptidoglycan biosynthesis. In terms of biological role, cell wall formation. In Rickettsia felis (strain ATCC VR-1525 / URRWXCal2) (Rickettsia azadi), this protein is UDP-N-acetylenolpyruvoylglucosamine reductase.